The chain runs to 260 residues: Phosphatidylglycerol--prolipoprotein diacylglyceryl transferase (260 aa).

4 consecutive transmembrane segments (helical) span residues Val17–Phe37, Leu52–Ile72, Ile85–Trp105, and Phe113–Gly133. Position 134 (Arg134) interacts with a 1,2-diacyl-sn-glycero-3-phospho-(1'-sn-glycerol). 3 consecutive transmembrane segments (helical) span residues Val170–Ile190, Gly198–Val218, and Gly227–Ile247.

Belongs to the Lgt family.

It is found in the cell membrane. The enzyme catalyses L-cysteinyl-[prolipoprotein] + a 1,2-diacyl-sn-glycero-3-phospho-(1'-sn-glycerol) = an S-1,2-diacyl-sn-glyceryl-L-cysteinyl-[prolipoprotein] + sn-glycerol 1-phosphate + H(+). Its pathway is protein modification; lipoprotein biosynthesis (diacylglyceryl transfer). Catalyzes the transfer of the diacylglyceryl group from phosphatidylglycerol to the sulfhydryl group of the N-terminal cysteine of a prolipoprotein, the first step in the formation of mature lipoproteins. This is Phosphatidylglycerol--prolipoprotein diacylglyceryl transferase from Dehalococcoides mccartyi (strain ATCC BAA-2266 / KCTC 15142 / 195) (Dehalococcoides ethenogenes (strain 195)).